A 346-amino-acid polypeptide reads, in one-letter code: Biotin synthase (346 aa).

Residues 38–256 (RQVQVSTLLS…IAVARIMMPT (219 aa)) enclose the Radical SAM core domain. Positions 53, 57, and 60 each coordinate [4Fe-4S] cluster. Residues C97, C128, C188, and R260 each contribute to the [2Fe-2S] cluster site.

It belongs to the radical SAM superfamily. Biotin synthase family. In terms of assembly, homodimer. [4Fe-4S] cluster serves as cofactor. [2Fe-2S] cluster is required as a cofactor.

The catalysed reaction is (4R,5S)-dethiobiotin + (sulfur carrier)-SH + 2 reduced [2Fe-2S]-[ferredoxin] + 2 S-adenosyl-L-methionine = (sulfur carrier)-H + biotin + 2 5'-deoxyadenosine + 2 L-methionine + 2 oxidized [2Fe-2S]-[ferredoxin]. It functions in the pathway cofactor biosynthesis; biotin biosynthesis; biotin from 7,8-diaminononanoate: step 2/2. In terms of biological role, catalyzes the conversion of dethiobiotin (DTB) to biotin by the insertion of a sulfur atom into dethiobiotin via a radical-based mechanism. The chain is Biotin synthase from Escherichia coli O6:K15:H31 (strain 536 / UPEC).